The following is a 309-amino-acid chain: Sulfate adenylyltransferase subunit 2 (309 aa).

Belongs to the PAPS reductase family. CysD subfamily. As to quaternary structure, heterodimer composed of CysD, the smaller subunit, and CysN.

The catalysed reaction is sulfate + ATP + H(+) = adenosine 5'-phosphosulfate + diphosphate. It participates in sulfur metabolism; hydrogen sulfide biosynthesis; sulfite from sulfate: step 1/3. Its function is as follows. With CysN forms the ATP sulfurylase (ATPS) that catalyzes the adenylation of sulfate producing adenosine 5'-phosphosulfate (APS) and diphosphate, the first enzymatic step in sulfur assimilation pathway. APS synthesis involves the formation of a high-energy phosphoric-sulfuric acid anhydride bond driven by GTP hydrolysis by CysN coupled to ATP hydrolysis by CysD. This Methylorubrum populi (strain ATCC BAA-705 / NCIMB 13946 / BJ001) (Methylobacterium populi) protein is Sulfate adenylyltransferase subunit 2.